We begin with the raw amino-acid sequence, 82 residues long: Small ribosomal subunit protein uS17 (82 aa).

Belongs to the universal ribosomal protein uS17 family. In terms of assembly, part of the 30S ribosomal subunit.

One of the primary rRNA binding proteins, it binds specifically to the 5'-end of 16S ribosomal RNA. The polypeptide is Small ribosomal subunit protein uS17 (Tolumonas auensis (strain DSM 9187 / NBRC 110442 / TA 4)).